The following is a 66-amino-acid chain: Photosystem II reaction center protein J (66 aa).

A helical membrane pass occupies residues 37–57 (LWLVATAGGMAVLFVVGLFFY).

This sequence belongs to the PsbJ family. As to quaternary structure, PSII is composed of 1 copy each of membrane proteins PsbA, PsbB, PsbC, PsbD, PsbE, PsbF, PsbH, PsbI, PsbJ, PsbK, PsbL, PsbM, PsbT, PsbX, PsbY, PsbZ, Psb30/Ycf12, peripheral proteins PsbO, CyanoQ (PsbQ), PsbU, PsbV and a large number of cofactors. It forms dimeric complexes.

It is found in the cellular thylakoid membrane. In terms of biological role, one of the components of the core complex of photosystem II (PSII). PSII is a light-driven water:plastoquinone oxidoreductase that uses light energy to abstract electrons from H(2)O, generating O(2) and a proton gradient subsequently used for ATP formation. It consists of a core antenna complex that captures photons, and an electron transfer chain that converts photonic excitation into a charge separation. This chain is Photosystem II reaction center protein J, found in Synechococcus sp. (strain WH7803).